Here is a 223-residue protein sequence, read N- to C-terminus: Neurotrophic factor BDNF precursor form (223 aa).

The first 5 residues, 1-5 (SCMKA), serve as a signal peptide directing secretion. A propeptide spanning residues 6-114 (APMKEVSIRG…AANMSMRVRR (109 aa)) is cleaved from the precursor. N-linked (GlcNAc...) asparagine glycosylation occurs at Asn107. Intrachain disulfides connect Cys127/Cys194 and Cys172/Cys223.

This sequence belongs to the NGF-beta family.

The protein resides in the secreted. Functionally, promotes the survival of neuronal populations that are all located either in the central nervous system or directly connected to it. The chain is Neurotrophic factor BDNF precursor form (BDNF) from Eryx colubrinus colubrinus.